We begin with the raw amino-acid sequence, 1794 residues long: Non-reducing polyketide synthase nscA (1794 aa).

Residues Asp19–His256 form an N-terminal acylcarrier protein transacylase domain (SAT) region. Positions Ala389–Asp822 constitute a Ketosynthase family 3 (KS3) domain. Residues Asp428–Gly440 are compositionally biased toward basic and acidic residues. The tract at residues Asp428–Thr448 is disordered. Active-site for beta-ketoacyl synthase activity residues include Cys562, His697, and His740. The tract at residues Thr927–Glu1230 is malonyl-CoA:ACP transacylase (MAT) domain. Residues Thr1314–Pro1633 form a product template (PT) domain region. An N-terminal hotdog fold region spans residues His1318 to Ala1454. One can recognise a PKS/mFAS DH domain in the interval His1318 to Asp1628. His1350 (proton acceptor; for dehydratase activity) is an active-site residue. A C-terminal hotdog fold region spans residues Ala1482–Asp1628. Asp1539 (proton donor; for dehydratase activity) is an active-site residue. The segment at Ser1637–Asp1719 is disordered. Residues Gln1644–Lys1655 show a composition bias toward polar residues. Residues Ser1717 to Cys1794 form the Carrier domain. Residue Ser1754 is modified to O-(pantetheine 4'-phosphoryl)serine.

It depends on pantetheine 4'-phosphate as a cofactor.

It functions in the pathway secondary metabolite biosynthesis. Functionally, non-reducing polyketide synthase; part of the gene cluster that mediates the biosynthesis of neosartoricin, a prenylated anthracenone that exhibits T-cell antiproliferative activity, suggestive of a physiological role as an immunosuppressive agent. The non-reducing polyketide synthase nscA probably synthesizes and cyclizes the decaketide backbone. The hydrolase nscB then mediates the product release through hydrolysis followed by spontaneous decarboxylation. The prenyltransferase nscD catalyzes the addition of the dimethylallyl group to the aromatic C5. The FAD-dependent monooxygenase nscC is then responsible for the stereospecific hydroxylation at C2. There is no gene encoding O-acetyltransferase in the nsc gene cluster; thus, the last step of 2-O-acetylation leading to neosartoricin may be catalyzed by an unidentified O-acetyltransferase. The polypeptide is Non-reducing polyketide synthase nscA (Aspergillus fumigatus (strain ATCC MYA-4609 / CBS 101355 / FGSC A1100 / Af293) (Neosartorya fumigata)).